We begin with the raw amino-acid sequence, 1044 residues long: Ribonucleoside-diphosphate reductase subunit alpha (1044 aa).

3 ATP-cone domains span residues 9–111, 118–217, and 235–325; these read YTIV…KAER, IAII…ARAR, and YVVQ…ETLG. Substrate-binding positions include Thr440, 455–456, Gly484, 668–672, and 855–859; these read SC, NLCTE, and PTATI. Cys456 and Cys685 are oxidised to a cystine. Asn668 serves as the catalytic Proton acceptor. The active-site Cysteine radical intermediate is the Cys670. Residue Glu672 is the Proton acceptor of the active site.

This sequence belongs to the ribonucleoside diphosphate reductase large chain family. As to quaternary structure, tetramer of two alpha and two beta subunits.

It catalyses the reaction a 2'-deoxyribonucleoside 5'-diphosphate + [thioredoxin]-disulfide + H2O = a ribonucleoside 5'-diphosphate + [thioredoxin]-dithiol. With respect to regulation, under complex allosteric control mediated by deoxynucleoside triphosphates and ATP binding. The type of nucleotide bound at the specificity site determines substrate preference. It seems probable that ATP makes the enzyme reduce CDP and UDP, dGTP favors ADP reduction and dTTP favors GDP reduction. Functionally, provides the precursors necessary for DNA synthesis. Catalyzes the biosynthesis of deoxyribonucleotides from the corresponding ribonucleotides. The chain is Ribonucleoside-diphosphate reductase subunit alpha (nrdA) from Chlamydia pneumoniae (Chlamydophila pneumoniae).